The sequence spans 103 residues: Photosystem II 5 kDa protein, chloroplastic (103 aa).

Residues M1 to E75 constitute a chloroplast transit peptide.

The maturation of the PSII-T precursor to its final form occurs through a two step process. First, a stromal intermediate is formed, which, upon translocation into the thylakoid membrane, is processed to the mature protein.

The protein localises to the plastid. The protein resides in the chloroplast thylakoid membrane. Functionally, may be a component of the oxygen-evolving complex. The protein is Photosystem II 5 kDa protein, chloroplastic (PSBT) of Arabidopsis thaliana (Mouse-ear cress).